A 267-amino-acid polypeptide reads, in one-letter code: Shikimate dehydrogenase (NADP(+)) (267 aa).

Shikimate-binding positions include 14–16 (SLS) and threonine 61. Lysine 65 acts as the Proton acceptor in catalysis. Residues asparagine 86 and aspartate 101 each coordinate shikimate. NADP(+) contacts are provided by residues 126–130 (GAGGA), 150–155 (NRTPFK), and leucine 213. Residue tyrosine 215 coordinates shikimate. Glycine 236 is a binding site for NADP(+).

The protein belongs to the shikimate dehydrogenase family. In terms of assembly, homodimer.

The enzyme catalyses shikimate + NADP(+) = 3-dehydroshikimate + NADPH + H(+). The protein operates within metabolic intermediate biosynthesis; chorismate biosynthesis; chorismate from D-erythrose 4-phosphate and phosphoenolpyruvate: step 4/7. Its function is as follows. Involved in the biosynthesis of the chorismate, which leads to the biosynthesis of aromatic amino acids. Catalyzes the reversible NADPH linked reduction of 3-dehydroshikimate (DHSA) to yield shikimate (SA). The polypeptide is Shikimate dehydrogenase (NADP(+)) (Ruthia magnifica subsp. Calyptogena magnifica).